Consider the following 403-residue polypeptide: 5,7-dihydroxy-2-methylchromone synthase (403 aa).

Histidine 68 provides a ligand contact to CoA. Residue cysteine 174 is part of the active site. Position 174 is a cysteine sulfinic acid (-SO2H) (cysteine 174). Residues leucine 277, serine 281, and 318 to 321 (GGRA) contribute to the CoA site.

This sequence belongs to the thiolase-like superfamily. Chalcone/stilbene synthases family. In terms of assembly, homodimer.

It catalyses the reaction 5 malonyl-CoA + 4 H(+) = 5,7-dihydroxy-2-methyl-4H-chromen-4-one + 5 CO2 + 5 CoA + H2O. It participates in secondary metabolite biosynthesis; flavonoid biosynthesis. Catalyzes the iterative condensations of 5 molecules of malonyl-CoA to produce a pentaketide 5,7-dihydroxy-2-methylchromone. The protein is 5,7-dihydroxy-2-methylchromone synthase of Aloe arborescens (Kidachi aloe).